A 310-amino-acid chain; its full sequence is Porphobilinogen deaminase (310 aa).

Cys243 carries the S-(dipyrrolylmethanemethyl)cysteine modification.

The protein belongs to the HMBS family. As to quaternary structure, monomer. Dipyrromethane serves as cofactor.

It carries out the reaction 4 porphobilinogen + H2O = hydroxymethylbilane + 4 NH4(+). It functions in the pathway porphyrin-containing compound metabolism; protoporphyrin-IX biosynthesis; coproporphyrinogen-III from 5-aminolevulinate: step 2/4. Functionally, tetrapolymerization of the monopyrrole PBG into the hydroxymethylbilane pre-uroporphyrinogen in several discrete steps. The polypeptide is Porphobilinogen deaminase (Methylobacillus flagellatus (strain ATCC 51484 / DSM 6875 / VKM B-1610 / KT)).